A 68-amino-acid chain; its full sequence is DNA-directed RNA polymerase subunit omega (68 aa).

Belongs to the RNA polymerase subunit omega family. In terms of assembly, the RNAP catalytic core consists of 2 alpha, 1 beta, 1 beta' and 1 omega subunit. When a sigma factor is associated with the core the holoenzyme is formed, which can initiate transcription.

The enzyme catalyses RNA(n) + a ribonucleoside 5'-triphosphate = RNA(n+1) + diphosphate. Its function is as follows. Promotes RNA polymerase assembly. Latches the N- and C-terminal regions of the beta' subunit thereby facilitating its interaction with the beta and alpha subunits. The polypeptide is DNA-directed RNA polymerase subunit omega (Chromobacterium violaceum (strain ATCC 12472 / DSM 30191 / JCM 1249 / CCUG 213 / NBRC 12614 / NCIMB 9131 / NCTC 9757 / MK)).